We begin with the raw amino-acid sequence, 369 residues long: Cytokine receptor common subunit gamma (369 aa).

The signal sequence occupies residues 1-22 (MLKLLLSPRSFLVLQLLLLRAG). The Extracellular segment spans residues 23-263 (WSSKVLMSSA…ENPSLFALEA (241 aa)). A disulfide bridge connects residues Cys62 and Cys72. Asn71, Asn75, Asn84, and Asn96 each carry an N-linked (GlcNAc...) asparagine glycan. A disulfide bridge links Cys102 with Cys115. One can recognise a Fibronectin type-III domain in the interval 156–254 (APENLTLSNL…VHWGSHTVEE (99 aa)). N-linked (GlcNAc...) asparagine glycans are attached at residues Asn159 and Asn164. The WSXWS motif signature appears at 238–242 (WSKWS). A helical membrane pass occupies residues 264–284 (VLIPVGTMGLIITLIFVYCWL). Residues 285-369 (ERMPPIPPIK…PPCYSLKPEA (85 aa)) are Cytoplasmic-facing. Positions 286–294 (RMPPIPPIK) match the Box 1 motif motif.

It belongs to the type I cytokine receptor family. Type 5 subfamily. In terms of assembly, the gamma subunit is common to the IL2, IL4, IL7, IL15, IL21 and probably also the IL13 receptors. Interacts with SHB upon interleukin stimulation. Interacts with IL9.

Its subcellular location is the cell membrane. It is found in the cell surface. Functionally, common subunit for the receptors for a variety of interleukins. Probably in association with IL15RA, involved in the stimulation of neutrophil phagocytosis by IL15. The chain is Cytokine receptor common subunit gamma (Il2rg) from Mus musculus (Mouse).